The chain runs to 535 residues: Unconventional prefoldin RPB5 interactor 1 (535 aa).

Methionine 1 is modified (N-acetylmethionine). 4 disordered regions span residues 1 to 23 (MEAP…PALV), 223 to 330 (LLGE…VGDN), 352 to 383 (KNTT…QELP), and 412 to 431 (SRSR…AAEF). Over residues 7–18 (ETPPDPSPPSAP) the composition is skewed to pro residues. Composition is skewed to polar residues over residues 253 to 265 (TNVN…TDSH) and 276 to 296 (EPFS…SSSY). Residues 299 to 320 (DDDDDDDDDDDDDNIDDDDGDN) are compositionally biased toward acidic residues. Position 372 is a phosphoserine; by RPS6KB1 (serine 372). Threonine 373 is subject to Phosphothreonine. Residues 417–427 (NSVCSDTSESS) show a composition bias toward polar residues. At serine 442 the chain carries Phosphoserine.

It belongs to the RNA polymerase II subunit 5-mediating protein family. As to quaternary structure, homodimer. Component of the PAQosome complex which is responsible for the biogenesis of several protein complexes and which consists of R2TP complex members RUVBL1, RUVBL2, RPAP3 and PIH1D1, URI complex members PFDN2, PFDN6, PDRG1, UXT and URI1 as well as ASDURF, POLR2E and DNAAF10/WDR92. Interacts with POLR2E/RPB5, RUVBL2 and RUVBL1. Interacts with PFDN2, PFDN4 and STAP1; the interactions are phosphorylation-dependent and occur in a growth-dependent manner in the mitochondrion. Interacts with UXT. Interacts with PPP1CC; the interaction is phosphorylation-dependent and occurs in a growth factor-dependent manner. Interacts (via the middle C-terminal region) with GTF2F1 and GTF2F2. Interacts with DMAP1. Interacts with TSC1 and TSC2. Interacts with PRPF8 and EFTUD2 in a ZNHIT2-dependent manner. Post-translationally, phosphorylated. Phosphorylation occurs essentially on serine residues. Phosphorylation occurs in response to androgen treatment in prostate cancer cells in a mTOR-dependent manner. Phosphorylated; hyperhosphorylated in mitochondria in a mTORC-dependent signaling pathway. Phosphorylated at Ser-372 by RPS6KB1 in a growth factor- and rapamycin-dependent manner. S6K1-mediated mitochondrial phosphorylation at Ser-372 disrupts the URI1-PPP1CC complex in the mitochondrion, relieves PPP1CC phosphatase inhibition activity and hence engages a negative feedback diminishing RPS6KB1 kinase activity, preventing sustained S6K1-dependent signaling. As to expression, ubiquitous. Expressed in ovarian cancers (at protein level). Expressed strongly in skeletal muscle. Expressed weakly in brain, heart, pancreas and in prostate epithelial cells.

It localises to the nucleus. Its subcellular location is the cytoplasm. The protein localises to the mitochondrion. It is found in the cell projection. The protein resides in the dendrite. Involved in gene transcription regulation. Acts as a transcriptional repressor in concert with the corepressor UXT to regulate androgen receptor (AR) transcription. May act as a tumor suppressor to repress AR-mediated gene transcription and to inhibit anchorage-independent growth in prostate cancer cells. Required for cell survival in ovarian cancer cells. Together with UXT, associates with chromatin to the NKX3-1 promoter region. Antagonizes transcriptional modulation via hepatitis B virus X protein. In terms of biological role, plays a central role in maintaining S6K1 signaling and BAD phosphorylation under normal growth conditions thereby protecting cells from potential deleterious effects of sustained S6K1 signaling. The URI1-PPP1CC complex acts as a central component of a negative feedback mechanism that counteracts excessive S6K1 survival signaling to BAD in response to growth factors. Mediates inhibition of PPP1CC phosphatase activity in mitochondria. Coordinates the regulation of nutrient-sensitive gene expression availability in a mTOR-dependent manner. Seems to be a scaffolding protein able to assemble a prefoldin-like complex that contains PFDs and proteins with roles in transcription and ubiquitination. This chain is Unconventional prefoldin RPB5 interactor 1 (URI1), found in Homo sapiens (Human).